A 398-amino-acid chain; its full sequence is MNTPTHTHPHPFGSTATIRCERAAAELRTGRPVLLIDAHARRHAVMALDSMTAQSFATFANAVGNTHYLFLTPVRSNVLGLEAPQGARIPLATLSYDSLAKLAYLRQPTRPTAWAPGDIMDAAATEITRLALLLPAIVAAPLTQHTEHAFADCQTLDLADLDTAAACASTTEYELVTRTPVPLRDLGMSEFIVFRGGIAQRDQVAILIGRPDLSSAVPVRVHSSCLTGDLFGSLKCDCGDQLRHSLATLKALGGGVLLYLDQEGRGNGIAAKIRAYGYQHVGLDTIDADAQLGFGPDERRYTGAVMMLRALGITRIQLLSNNPAKAERLRAAGIIVKQRISVIGQITKQNEHYLRTKVSRAGHDLDIDALIMTSQRPQDPSETVDGETVKPIAKTGHA.

The interval 1 to 172 (MNTPTHTHPH…TAAACASTTE (172 aa)) is unknown. The GTP cyclohydrolase II stretch occupies residues 173–398 (YELVTRTPVP…VKPIAKTGHA (226 aa)). 220–224 (RVHSS) lines the GTP pocket. Zn(2+)-binding residues include Cys225, Cys236, and Cys238. GTP is bound by residues Gln241, 263 to 265 (EGR), and Thr285. Asp297 acts as the Proton acceptor in catalysis. Catalysis depends on Arg299, which acts as the Nucleophile. Positions 320 and 325 each coordinate GTP. Positions 375–398 (QRPQDPSETVDGETVKPIAKTGHA) are disordered.

In the C-terminal section; belongs to the GTP cyclohydrolase II family. Zn(2+) serves as cofactor.

The catalysed reaction is GTP + 4 H2O = 2,5-diamino-6-hydroxy-4-(5-phosphoribosylamino)-pyrimidine + formate + 2 phosphate + 3 H(+). It participates in cofactor biosynthesis; riboflavin biosynthesis; 5-amino-6-(D-ribitylamino)uracil from GTP: step 1/4. In terms of biological role, catalyzes the conversion of GTP to 2,5-diamino-6-ribosylamino-4(3H)-pyrimidinone 5'-phosphate (DARP), formate and pyrophosphate. This is GTP cyclohydrolase-2 (ribA) from Xylella fastidiosa (strain Temecula1 / ATCC 700964).